We begin with the raw amino-acid sequence, 514 residues long: DNA damage-binding protein CMR1 (514 aa).

Residues 26–116 (NLDSLSQSIK…VKQEEKEELS (91 aa)) form a disordered region. Positions 34-44 (IKRELPRASET) are enriched in basic and acidic residues. The span at 45–55 (KKRKTTPRTKA) shows a compositional bias: basic residues. Composition is skewed to basic and acidic residues over residues 56-65 (VKKEDVEPSR) and 92-116 (KFED…EELS). WD repeat units follow at residues 180 to 221 (ISHT…DDSE), 229 to 269 (PHGK…STEV), 280 to 320 (DYAL…KPLK), 327 to 367 (LHDK…KANA), 385 to 423 (SSRL…LIPD), 438 to 481 (GRWV…IAHL), and 483 to 514 (DSVG…YLFE).

This sequence belongs to the WD repeat DDB2/WDR76 family.

Its function is as follows. DNA-binding protein that binds to both single- and double-stranded DNA. Binds preferentially to UV-damaged DNA. May be involved in DNA-metabolic processes. The chain is DNA damage-binding protein CMR1 (PRW1) from Scheffersomyces stipitis (strain ATCC 58785 / CBS 6054 / NBRC 10063 / NRRL Y-11545) (Yeast).